We begin with the raw amino-acid sequence, 490 residues long: Polyamine oxidase 2 (490 aa).

Residues E57, R65, V246, and E433 each contribute to the FAD site. The Microbody targeting signal motif lies at 488 to 490; the sequence is SRL.

This sequence belongs to the flavin monoamine oxidase family. The cofactor is FAD. In terms of tissue distribution, highly expressed in flowers and siliques. Also found in leaf and stem and in low levels in cotyledons, roots and in seedlings.

It is found in the peroxisome. It carries out the reaction spermine + O2 + H2O = 3-aminopropanal + spermidine + H2O2. The enzyme catalyses N(1)-acetylspermine + O2 + H2O = 3-acetamidopropanal + spermidine + H2O2. It catalyses the reaction spermidine + O2 + H2O = 3-aminopropanal + putrescine + H2O2. It functions in the pathway amine and polyamine degradation; spermine degradation. The protein operates within amine and polyamine degradation; spermidine degradation. Flavoenzyme involved in polyamine back-conversion. Catalyzes the oxidation of the secondary amino group of polyamines, such as spermine, spermidine and their acetyl derivatives. Substrate preference is N(1)-acetylspermine &gt; spermine &gt; spermidine. Plays an important role in the regulation of polyamine intracellular concentration. Involved in abscisic acid-mediated developmental processes. May contribute to nitric oxide-mediated effects on root growth. This is Polyamine oxidase 2 from Arabidopsis thaliana (Mouse-ear cress).